Here is a 465-residue protein sequence, read N- to C-terminus: Exoenzymes regulatory protein AepA (465 aa).

The N-terminal stretch at 1-21 is a signal peptide; sequence MKFNVKMLSVTLGLFTSHAFA.

This sequence belongs to the metallo-dependent hydrolases superfamily.

In terms of biological role, involved in the control of extracellular enzymes production. Stimulates PEL, PEH, CEL, and PRT production. This Pectobacterium carotovorum subsp. carotovorum (Erwinia carotovora subsp. carotovora) protein is Exoenzymes regulatory protein AepA (aepA).